The sequence spans 192 residues: Ion-translocating oxidoreductase complex subunit B (192 aa).

Residues 1–26 form a hydrophobic region; it reads MNTIWIAVGALALLGLVFGAILGYAS. The 4Fe-4S domain maps to 32 to 91; it reads EDDPVVEKIDAILPQSQCGQCGYPGCRPYAEAVGLQGEKINRCAPGGEAVMLKIAELLNV. [4Fe-4S] cluster-binding residues include cysteine 49, cysteine 52, cysteine 57, cysteine 74, cysteine 117, cysteine 120, cysteine 123, cysteine 127, cysteine 147, cysteine 150, cysteine 153, and cysteine 157. 4Fe-4S ferredoxin-type domains lie at 108–137 and 138–167; these read MLAVIDENNCIGCTKCIQACPVDAIVGATR and AMHTVMSDLCTGCNLCVDPCPTHCIELRPV.

The protein belongs to the 4Fe4S bacterial-type ferredoxin family. RnfB subfamily. The complex is composed of six subunits: RsxA, RsxB, RsxC, RsxD, RsxE and RsxG. Requires [4Fe-4S] cluster as cofactor.

The protein localises to the cell inner membrane. Functionally, part of a membrane-bound complex that couples electron transfer with translocation of ions across the membrane. Required to maintain the reduced state of SoxR. The sequence is that of Ion-translocating oxidoreductase complex subunit B from Salmonella newport (strain SL254).